Here is a 169-residue protein sequence, read N- to C-terminus: Phosphopantetheine adenylyltransferase (169 aa).

Ser-10 contributes to the substrate binding site. Residues 10–11 (SF) and His-18 each bind ATP. Positions 42, 74, and 88 each coordinate substrate. ATP contacts are provided by residues 89-91 (GLR), Glu-99, and 124-130 (YAFLSSS).

This sequence belongs to the bacterial CoaD family. As to quaternary structure, homohexamer. Requires Mg(2+) as cofactor.

It is found in the cytoplasm. The catalysed reaction is (R)-4'-phosphopantetheine + ATP + H(+) = 3'-dephospho-CoA + diphosphate. The protein operates within cofactor biosynthesis; coenzyme A biosynthesis; CoA from (R)-pantothenate: step 4/5. Its function is as follows. Reversibly transfers an adenylyl group from ATP to 4'-phosphopantetheine, yielding dephospho-CoA (dPCoA) and pyrophosphate. The polypeptide is Phosphopantetheine adenylyltransferase (Geobacillus sp. (strain WCH70)).